We begin with the raw amino-acid sequence, 724 residues long: DNA ligase (724 aa).

NAD(+)-binding positions include 44–48 (DADYD), 93–94 (SL), and E127. K129 (N6-AMP-lysine intermediate) is an active-site residue. The NAD(+) site is built by R150, E186, K307, and K331. Residues C437, C440, C461, and C467 each coordinate Zn(2+). Positions 646–724 (TEGSPVAGKT…EDEWLALIGG (79 aa)) constitute a BRCT domain.

It belongs to the NAD-dependent DNA ligase family. LigA subfamily. Requires Mg(2+) as cofactor. Mn(2+) serves as cofactor.

It carries out the reaction NAD(+) + (deoxyribonucleotide)n-3'-hydroxyl + 5'-phospho-(deoxyribonucleotide)m = (deoxyribonucleotide)n+m + AMP + beta-nicotinamide D-nucleotide.. In terms of biological role, DNA ligase that catalyzes the formation of phosphodiester linkages between 5'-phosphoryl and 3'-hydroxyl groups in double-stranded DNA using NAD as a coenzyme and as the energy source for the reaction. It is essential for DNA replication and repair of damaged DNA. The sequence is that of DNA ligase from Agrobacterium fabrum (strain C58 / ATCC 33970) (Agrobacterium tumefaciens (strain C58)).